The chain runs to 224 residues: UPF0758 protein HEAR2468 (224 aa).

Residues 102–224 (ALNSPQAVKQ…VYSFAEQGQL (123 aa)) enclose the MPN domain. Zn(2+) is bound by residues H173, H175, and D186. Residues 173 to 186 (HNHPSGTPEPSAAD) carry the JAMM motif motif.

This sequence belongs to the UPF0758 family.

This is UPF0758 protein HEAR2468 from Herminiimonas arsenicoxydans.